Consider the following 206-residue polypeptide: Dephospho-CoA kinase (206 aa).

The DPCK domain maps to 4–200; the sequence is IVALTGGIGS…AYYLQLASQF (197 aa). 12–17 lines the ATP pocket; it reads GSGKST.

The protein belongs to the CoaE family.

Its subcellular location is the cytoplasm. It carries out the reaction 3'-dephospho-CoA + ATP = ADP + CoA + H(+). The protein operates within cofactor biosynthesis; coenzyme A biosynthesis; CoA from (R)-pantothenate: step 5/5. Its function is as follows. Catalyzes the phosphorylation of the 3'-hydroxyl group of dephosphocoenzyme A to form coenzyme A. The chain is Dephospho-CoA kinase from Escherichia coli O6:H1 (strain CFT073 / ATCC 700928 / UPEC).